A 148-amino-acid polypeptide reads, in one-letter code: uncharacterized protein (148 aa).

This is an uncharacterized protein from Pyrococcus woesei.